Here is an 80-residue protein sequence, read N- to C-terminus: Polcalcin Cyn d 7 (80 aa).

2 consecutive EF-hand domains span residues 2–37 (ADTG…LGST) and 40–72 (DEVQ…NPGL). Ca(2+)-binding residues include Asp15, Asn17, Asp19, Lys21, Glu26, Asp50, Asp52, Asp54, and Glu61.

This chain is Polcalcin Cyn d 7, found in Cynodon dactylon (Bermuda grass).